Reading from the N-terminus, the 138-residue chain is uncharacterized protein (138 aa).

Disordered stretches follow at residues 1–23 (MPES…MLSE) and 35–83 (ASPS…EDPV). Positions 60–69 (DEETIPEEDD) are enriched in acidic residues.

This is an uncharacterized protein from Schizosaccharomyces pombe (strain 972 / ATCC 24843) (Fission yeast).